The sequence spans 319 residues: L-lactate dehydrogenase (319 aa).

Residues Val-17, Asp-38, Lys-43, Tyr-69, and 83-84 (GA) contribute to the NAD(+) site. Substrate contacts are provided by Gln-86 and Arg-92. NAD(+) is bound by residues Thr-105, 122–124 (ATN), and Ser-147. 124–127 (NPVD) contributes to the substrate binding site. 152-155 (DTAR) is a substrate binding site. Residues Arg-157 and His-172 each coordinate beta-D-fructose 1,6-bisphosphate. His-179 (proton acceptor) is an active-site residue. At Tyr-224 the chain carries Phosphotyrosine. Thr-233 lines the substrate pocket.

This sequence belongs to the LDH/MDH superfamily. LDH family. In terms of assembly, homotetramer.

The protein resides in the cytoplasm. The catalysed reaction is (S)-lactate + NAD(+) = pyruvate + NADH + H(+). The protein operates within fermentation; pyruvate fermentation to lactate; (S)-lactate from pyruvate: step 1/1. Its activity is regulated as follows. Allosterically activated by fructose 1,6-bisphosphate (FBP). Its function is as follows. Catalyzes the conversion of lactate to pyruvate. This Geobacillus sp. (strain WCH70) protein is L-lactate dehydrogenase.